The primary structure comprises 369 residues: Allantoicase (369 aa).

The segment at 341-369 (PDSKNNNNNNNNNNNNNTSNSFKTSDRQQ) is disordered. Residues 345–357 (NNNNNNNNNNNNN) are compositionally biased toward low complexity.

It belongs to the allantoicase family.

The enzyme catalyses allantoate + H2O = (S)-ureidoglycolate + urea. It participates in nitrogen metabolism; (S)-allantoin degradation; (S)-ureidoglycolate from allantoate (aminidohydrolase route): step 1/1. Utilization of purines as secondary nitrogen sources, when primary sources are limiting. The protein is Allantoicase (allC) of Dictyostelium discoideum (Social amoeba).